Here is a 160-residue protein sequence, read N- to C-terminus: SsrA-binding protein (160 aa).

The interval 1 to 23 (MARKKKQDKGQGPKTIAQNRRAR) is disordered.

Belongs to the SmpB family.

The protein localises to the cytoplasm. Functionally, required for rescue of stalled ribosomes mediated by trans-translation. Binds to transfer-messenger RNA (tmRNA), required for stable association of tmRNA with ribosomes. tmRNA and SmpB together mimic tRNA shape, replacing the anticodon stem-loop with SmpB. tmRNA is encoded by the ssrA gene; the 2 termini fold to resemble tRNA(Ala) and it encodes a 'tag peptide', a short internal open reading frame. During trans-translation Ala-aminoacylated tmRNA acts like a tRNA, entering the A-site of stalled ribosomes, displacing the stalled mRNA. The ribosome then switches to translate the ORF on the tmRNA; the nascent peptide is terminated with the 'tag peptide' encoded by the tmRNA and targeted for degradation. The ribosome is freed to recommence translation, which seems to be the essential function of trans-translation. In Thermobifida fusca (strain YX), this protein is SsrA-binding protein.